The following is a 259-amino-acid chain: MELLAKTRKLNALLQSAAGKPVNFREMSDTMCEVIEANVFVVSRRGKLLGYAIHQQIENERMKQMLAERQFPEEYTQSLFNITETSSNLDVNSAYTAFPVENKELFGQGLTTIVPIVGGGERLGTLVLARLGQEFLDDDLILAEYSSTVVGMEILREKAEEIEEEARSKAVVQMAISSLSYSELEAIEHIFEELNGTEGLLVASKIADRVGITRSVIVNALRKLESAGVIESRSLGMKGTYIKVLNDKFLHELAKLKTN.

Positions 1–155 (MELLAKTRKL…SSTVVGMEIL (155 aa)) are GAF domain. Residues 203–222 (ASKIADRVGITRSVIVNALR) constitute a DNA-binding region (H-T-H motif). At serine 215 the chain carries Phosphoserine.

This sequence belongs to the CodY family.

The protein resides in the cytoplasm. Its function is as follows. DNA-binding global transcriptional regulator which is involved in the adaptive response to starvation and acts by directly or indirectly controlling the expression of numerous genes in response to nutrient availability. During rapid exponential growth, CodY is highly active and represses genes whose products allow adaptation to nutrient depletion. The polypeptide is Global transcriptional regulator CodY (Bacillus anthracis (strain A0248)).